We begin with the raw amino-acid sequence, 236 residues long: Transcriptional regulatory protein RprY (236 aa).

Residues 9-123 form the Response regulatory domain; sequence RILLCEDDEN…ELTFRIEAIL (115 aa). Aspartate 58 bears the 4-aspartylphosphate mark. Positions 134-231 form a DNA-binding region, ompR/PhoB-type; it reads SNVYKIGKFT…IHGKGYKLIT (98 aa).

Phosphorylated by RprX.

It is found in the cytoplasm. Functionally, member of the two-component regulatory system RprX/RprY. The protein is Transcriptional regulatory protein RprY (rprY) of Bacteroides fragilis (strain YCH46).